The sequence spans 136 residues: Ribonuclease VapC1 (136 aa).

The region spanning isoleucine 18 to phenylalanine 129 is the PINc domain. Residues aspartate 21 and aspartate 101 each contribute to the Mg(2+) site.

It belongs to the PINc/VapC protein family. Mg(2+) is required as a cofactor.

In terms of biological role, toxic component of a type II toxin-antitoxin (TA) system. An RNase. Its cognate antitoxin is VapB1. The polypeptide is Ribonuclease VapC1 (Methanocaldococcus jannaschii (strain ATCC 43067 / DSM 2661 / JAL-1 / JCM 10045 / NBRC 100440) (Methanococcus jannaschii)).